We begin with the raw amino-acid sequence, 253 residues long: 3-dehydroquinate dehydratase (253 aa).

3-dehydroquinate is bound by residues 46–48 and arginine 82; that span reads EWR. Histidine 143 (proton donor/acceptor) is an active-site residue. Lysine 170 acts as the Schiff-base intermediate with substrate in catalysis. Residues arginine 213, serine 232, and glutamine 236 each contribute to the 3-dehydroquinate site.

Belongs to the type-I 3-dehydroquinase family. Homodimer.

It carries out the reaction 3-dehydroquinate = 3-dehydroshikimate + H2O. It participates in metabolic intermediate biosynthesis; chorismate biosynthesis; chorismate from D-erythrose 4-phosphate and phosphoenolpyruvate: step 3/7. With respect to regulation, inhibited by flavonoids such as datiscetin, naringenin, marein and phloretin. In terms of biological role, involved in the third step of the chorismate pathway, which leads to the biosynthesis of aromatic amino acids (AroAA). Catalyzes the cis-dehydration of 3-dehydroquinate (DHQ) and introduces the first double bond of the aromatic ring to yield 3-dehydroshikimate. The reaction involves the formation of an imine intermediate between the keto group of 3-dehydroquinate and the epsilon-amino group of Lys-170 at the active site. This is 3-dehydroquinate dehydratase from Enterococcus faecalis (strain ATCC 700802 / V583).